The chain runs to 1383 residues: Insulin receptor (1383 aa).

A signal peptide spans 1 to 26 (MGSGRGCETTAVPLLMAVAVAGGTAG). Extracellular-side segments run 27 to 759 (HLYP…TRPS) and 764 to 957 (SLEE…NIAK). A disulfide bond links Cys-34 and Cys-52. N-linked (GlcNAc...) asparagine glycans are attached at residues Asn-42, Asn-51, Asn-104, and Asn-137. 9 cysteine pairs are disulfide-bonded: Cys-152–Cys-181, Cys-185–Cys-208, Cys-195–Cys-214, Cys-218–Cys-227, Cys-222–Cys-233, Cys-234–Cys-242, Cys-238–Cys-251, Cys-254–Cys-263, and Cys-267–Cys-279. An N-linked (GlcNAc...) asparagine glycan is attached at Asn-241. Asn-281 is a glycosylation site (N-linked (GlcNAc...) asparagine). Disulfide bonds link Cys-285–Cys-310, Cys-292–Cys-300, Cys-314–Cys-327, Cys-330–Cys-334, and Cys-338–Cys-359. Asn-321 is a glycosylation site (N-linked (GlcNAc...) asparagine). N-linked (GlcNAc...) asparagine glycosylation occurs at Asn-363. Ser-399 bears the Phosphoserine mark. A Phosphotyrosine modification is found at Tyr-400. The residue at position 406 (Ser-406) is a Phosphoserine. N-linked (GlcNAc...) asparagine glycosylation is found at Asn-423 and Asn-444. Residues Cys-461 and Cys-494 are joined by a disulfide bond. 4 N-linked (GlcNAc...) asparagine glycosylation sites follow: Asn-540, Asn-634, Asn-652, and Asn-699. Residues 625-727 (VPLDPISVSN…SQILKELEES (103 aa)) form the Fibronectin type-III 1 domain. Cysteines 675 and 900 form a disulfide. The interval 687–709 (SPPFESDDSQKHNQSEYDDSASE) is disordered. Positions 734–742 (EDYLHNVVF) are insulin-binding. The disordered stretch occupies residues 747-783 (TSSGNGAEDTRPSRKRRSLEEVGNVTATTPTLPDFPN). 2 Fibronectin type-III domains span residues 754–848 (EDTR…TMPE) and 854–948 (IVGP…VTDY). Residues Asn-770, Asn-783, Asn-921, and Asn-934 are each glycosylated (N-linked (GlcNAc...) asparagine). A compositionally biased stretch (polar residues) spans 771–783 (VTATTPTLPDFPN). A helical membrane pass occupies residues 958 to 978 (IIIGPLIFVFLFSVVIGSIYL). At 979-1383 (FLRKRQPDGP…VLTLPRSNPS (405 aa)) the chain is on the cytoplasmic side. The tract at residues 997–1000 (NPEY) is important for interaction with IRS1, SHC1 and STAT5B. Tyr-1000 is modified (phosphotyrosine; by autocatalysis). The Protein kinase domain maps to 1024–1299 (ITLLRELGQG…LLKDDLHPSF (276 aa)). ATP contacts are provided by Ser-1034 and Lys-1058. Residue Lys-1080 forms a Glycyl lysine isopeptide (Lys-Gly) (interchain with G-Cter in ubiquitin) linkage. Cys-1084 bears the S-nitrosocysteine mark. 1105–1111 (ELMAHGD) lines the ATP pocket. Residue Asp-1160 is the Proton donor/acceptor of the active site. Residues 1164-1165 (RN) and Asp-1178 contribute to the ATP site. Residues Tyr-1186, Tyr-1190, Tyr-1191, Tyr-1356, and Tyr-1362 each carry the phosphotyrosine; by autocatalysis modification. Positions 1361-1383 (PYTHMNGGKKNGRVLTLPRSNPS) are disordered. Residues 1362 to 1365 (YTHM) are PIK3R1 binding.

This sequence belongs to the protein kinase superfamily. Tyr protein kinase family. Insulin receptor subfamily. In terms of assembly, tetramer of 2 alpha and 2 beta chains linked by disulfide bonds. The alpha chains carry the insulin-binding regions, while the beta chains carry the kinase domain. Forms a hybrid receptor with IGF1R, the hybrid is a tetramer consisting of 1 alpha chain and 1 beta chain of INSR and 1 alpha chain and 1 beta chain of IGF1R. Interacts with SORBS1 but dissociates from it following insulin stimulation. Binds SH2B2. Activated form of INSR interacts (via Tyr-1000) with the PTB/PID domains of IRS1 and SHC1. The sequences surrounding the phosphorylated NPXY motif contribute differentially to either IRS1 or SHC1 recognition. Interacts (via tyrosines in the C-terminus) with IRS2 (via PTB domain and 591-786 AA); the 591-786 would be the primary anchor of IRS2 to INSR while the PTB domain would have a stabilizing action on the interaction with INSR. Interacts with the SH2 domains of the 85 kDa regulatory subunit of PI3K (PIK3R1) in vitro, when autophosphorylated on tyrosine residues. Interacts with SOCS7. Interacts (via the phosphorylated Tyr-1000), with SOCS3. Interacts (via the phosphorylated Tyr-1186, Tyr-1190, Tyr-1191) with SOCS1. Interacts with ARRB2. Interacts with GRB10; this interaction blocks the association between IRS1/IRS2 and INSR, significantly reduces insulin-stimulated tyrosine phosphorylation of IRS1 and IRS2 and thus decreases insulin signaling. Interacts with PDPK1. Interacts (via Tyr-1191) with GRB14 (via BPS domain); this interaction protects the tyrosines in the activation loop from dephosphorylation, but promotes dephosphorylation of Tyr-1000, this results in decreased interaction with, and phosphorylation of, IRS1. Interacts (via subunit alpha) with ENPP1 (via 485-599 AA); this interaction blocks autophosphorylation. Interacts with PTPRE; this interaction is dependent of Tyr-1186, Tyr-1190 and Tyr-1191 of the INSR. Interacts with STAT5B (via SH2 domain). Interacts with PTPRF. Interacts with GRB7. Interacts with CAV2 (tyrosine-phosphorylated form); the interaction is increased with 'Tyr-27'phosphorylation of CAV2. Interacts with ATIC; ATIC together with PRKAA2/AMPK2 and HACD3/PTPLAD1 is proposed to be part of a signaling netwok regulating INSR autophosphorylation and endocytosis. Interacts with the insulin receptor SORL1; this interaction strongly increases its surface exposure, hence strengthens insulin signal reception. Interacts (tyrosine phosphorylated) with CCDC88A/GIV (via SH2-like region); binding requires autophosphorylation of the Insr C-terminal region. Interacts with GNAI3; the interaction is probably mediated by CCDC88A/GIV. Interacts with LMBRD1. Interacts (in response to insulin stimulation) with NCK1; this interaction may recruit PTPN1 to mediate INSR dephosphorylation. Interacts with CD248; this interaction diminishes INSR autophosphorylation. After being transported from the endoplasmic reticulum to the Golgi apparatus, the single glycosylated precursor is further glycosylated and then cleaved, followed by its transport to the plasma membrane. In terms of processing, autophosphorylated on tyrosine residues in response to insulin. Phosphorylation of Tyr-1000 is required for binding to IRS1, SHC1 and STAT5B. May also be phosphorylated at Tyr-1186 and Tyr-1191 by mTORC2. Dephosphorylated by PTPRE at Tyr-1000, Tyr-1186, Tyr-1190 and Tyr-1191. Dephosphorylated by PTPRF and PTPN1. Dephosphorylated by PTPN2; down-regulates insulin-induced signaling. Post-translationally, S-nitrosylation at Cys-1084 by BLVRB inhibits the receptor tyrosine kinase, thereby inhibiting insulin signaling. Ubiquitinated by MARCHF1; leading to degradation thereby reducing surface INSR expression.

It localises to the cell membrane. The protein resides in the late endosome. The protein localises to the lysosome. It catalyses the reaction L-tyrosyl-[protein] + ATP = O-phospho-L-tyrosyl-[protein] + ADP + H(+). With respect to regulation, activated in response to insulin. Autophosphorylation activates the kinase activity. PTPN1, PTPRE and PTPRF dephosphorylate important tyrosine residues, thereby reducing INSR activity. Inhibited by ENPP1. GRB10 and GRB14 inhibit the catalytic activity of the INSR, they block access of substrates to the activated receptor. SOCS1 and SOCS3 act as negative regulators of INSR activity, they bind to the activated INRS and interfere with the phosphorylation of INSR substrates. Functionally, receptor tyrosine kinase which mediates the pleiotropic actions of insulin. Binding of insulin leads to phosphorylation of several intracellular substrates, including, insulin receptor substrates (IRS1, 2, 3, 4), SHC, GAB1, CBL and other signaling intermediates. Each of these phosphorylated proteins serve as docking proteins for other signaling proteins that contain Src-homology-2 domains (SH2 domain) that specifically recognize different phosphotyrosine residues, including the p85 regulatory subunit of PI3K and SHP2. Phosphorylation of IRSs proteins lead to the activation of two main signaling pathways: the PI3K-AKT/PKB pathway, which is responsible for most of the metabolic actions of insulin, and the Ras-MAPK pathway, which regulates expression of some genes and cooperates with the PI3K pathway to control cell growth and differentiation. Binding of the SH2 domains of PI3K to phosphotyrosines on IRS1 leads to the activation of PI3K and the generation of phosphatidylinositol-(3, 4, 5)-triphosphate (PIP3), a lipid second messenger, which activates several PIP3-dependent serine/threonine kinases, such as PDPK1 and subsequently AKT/PKB. The net effect of this pathway is to produce a translocation of the glucose transporter SLC2A4/GLUT4 from cytoplasmic vesicles to the cell membrane to facilitate glucose transport. Moreover, upon insulin stimulation, activated AKT/PKB is responsible for: anti-apoptotic effect of insulin by inducing phosphorylation of BAD; regulates the expression of gluconeogenic and lipogenic enzymes by controlling the activity of the winged helix or forkhead (FOX) class of transcription factors. Another pathway regulated by PI3K-AKT/PKB activation is mTORC1 signaling pathway which regulates cell growth and metabolism and integrates signals from insulin. AKT mediates insulin-stimulated protein synthesis by phosphorylating TSC2 thereby activating mTORC1 pathway. The Ras/RAF/MAP2K/MAPK pathway is mainly involved in mediating cell growth, survival and cellular differentiation of insulin. Phosphorylated IRS1 recruits GRB2/SOS complex, which triggers the activation of the Ras/RAF/MAP2K/MAPK pathway. In addition to binding insulin, the insulin receptor can bind insulin-like growth factors (IGFI and IGFII). When present in a hybrid receptor with IGF1R, binds IGF1. In adipocytes, inhibits lipolysis. This is Insulin receptor (Insr) from Rattus norvegicus (Rat).